We begin with the raw amino-acid sequence, 212 residues long: Large ribosomal subunit protein uL3 (212 aa).

The segment at 127–161 (NFKRGPMAHGSKNHRLPGSTGAGTTPGRVFPGKRM) is disordered.

The protein belongs to the universal ribosomal protein uL3 family. In terms of assembly, part of the 50S ribosomal subunit. Forms a cluster with proteins L14 and L19.

Functionally, one of the primary rRNA binding proteins, it binds directly near the 3'-end of the 23S rRNA, where it nucleates assembly of the 50S subunit. In Thermosynechococcus vestitus (strain NIES-2133 / IAM M-273 / BP-1), this protein is Large ribosomal subunit protein uL3.